The primary structure comprises 966 residues: Next to BRCA1 gene 1 protein (966 aa).

Residues 4 to 85 (QVTLNVTFKN…NQLQMQVHEG (82 aa)) form the PB1 domain. At serine 116 the chain carries Phosphoserine. A ZZ-type zinc finger spans residues 212 to 264 (SWHIACNNCQRRIVGVRYQCSLCPSYNICEDCEAGPYGHDTNHVLLKLRRPVV). The Zn(2+) site is built by cysteine 217, cysteine 220, cysteine 231, cysteine 234, cysteine 240, cysteine 243, histidine 250, and histidine 254. Positions 542 to 636 (ASERELYIPS…KRKAENIASV (95 aa)) are ATG8 family protein-binding. Threonine 586 carries the phosphothreonine; by GSK3-alpha modification. A phosphoserine mark is found at serine 590, serine 596, and serine 625. The span at 699–718 (EAVMEEEEDEEDEEEEDELK) shows a compositional bias: acidic residues. 3 disordered regions span residues 699 to 728 (EAVMEEEEDEEDEEEEDELKDEVQSQSSAS), 750 to 792 (MYSS…QPQE), and 848 to 879 (VPDQIRGEPRGSSGLVNSRQKSYDHSRHHHGS). The ATG8 family protein-binding stretch occupies residues 727-738 (ASSEDYIIILPE). The 45-residue stretch at 913 to 957 (SEDQTAALMAHLFEMGFCDRQLNLRLLKKHNYNILQVVTELLQLN) folds into the UBA domain.

Homooligomer and heterooligomer. Interacts with TRIM55. Interacts with titin/TTN. Interacts with RNF29, USP8, MAP1LC3A, MAP1LC3B, MAP1LC3C, GABARAP, GABARAPL1 and GABARAPL2. Binds to ubiquitin and ubiquitinated proteins. Interacts with SQSTM1. Interacts with TAX1BP1. Interacts with IRF3; this interaction mediates autophagic degradation of IRF3. Interacts with IL12A and IL12B. As to quaternary structure, (Microbial infection) Interacts with Influenza A virus protein PB1; this interaction promotes NBR1-mediated selective autophagic degradation of MAVS. In terms of processing, (Microbial infection) Cleaved by S.pyogenes SpeB protease; leading to its degradation. Degradation by SpeB prevents autophagy, promoting to S.pyogenes intracellular replication. Post-translationally, phosphorylated by GSK3A; this phosphorylation inhibits NBR1 involvement in the formation of ubiquitinated protein aggregates.

The protein localises to the cytoplasm. It localises to the cytoplasmic vesicle. Its subcellular location is the autophagosome. The protein resides in the lysosome. It is found in the myofibril. The protein localises to the sarcomere. It localises to the m line. Its function is as follows. Ubiquitin-binding autophagy adapter that participates in different processes including host defense or intracellular homeostasis. Possesses a double function during the selective autophagy by acting as a shuttle bringing ubiquitinated proteins to autophagosomes and also by participating in the formation of protein aggregates. Plays a role in the regulation of the innate immune response by modulating type I interferon production and targeting ubiquitinated IRF3 for autophagic degradation. In response to oxidative stress, promotes an increase in SQSTM1 levels, phosphorylation, and body formation by preventing its autophagic degradation. In turn, activates the KEAP1-NRF2/NFE2L2 antioxidant pathway. Also plays non-autophagy role by mediating the shuttle of IL-12 to late endosome for subsequent secretion. In Homo sapiens (Human), this protein is Next to BRCA1 gene 1 protein (NBR1).